A 215-amino-acid polypeptide reads, in one-letter code: Phosphatidylserine decarboxylase proenzyme (215 aa).

Serine 184 (schiff-base intermediate with substrate; via pyruvic acid) is an active-site residue. Serine 184 carries the post-translational modification Pyruvic acid (Ser); by autocatalysis.

The protein belongs to the phosphatidylserine decarboxylase family. PSD-A subfamily. Heterodimer of a large membrane-associated beta subunit and a small pyruvoyl-containing alpha subunit. Pyruvate serves as cofactor. In terms of processing, is synthesized initially as an inactive proenzyme. Formation of the active enzyme involves a self-maturation process in which the active site pyruvoyl group is generated from an internal serine residue via an autocatalytic post-translational modification. Two non-identical subunits are generated from the proenzyme in this reaction, and the pyruvate is formed at the N-terminus of the alpha chain, which is derived from the carboxyl end of the proenzyme. The post-translation cleavage follows an unusual pathway, termed non-hydrolytic serinolysis, in which the side chain hydroxyl group of the serine supplies its oxygen atom to form the C-terminus of the beta chain, while the remainder of the serine residue undergoes an oxidative deamination to produce ammonia and the pyruvoyl prosthetic group on the alpha chain.

It localises to the cell membrane. It catalyses the reaction a 1,2-diacyl-sn-glycero-3-phospho-L-serine + H(+) = a 1,2-diacyl-sn-glycero-3-phosphoethanolamine + CO2. Its pathway is phospholipid metabolism; phosphatidylethanolamine biosynthesis; phosphatidylethanolamine from CDP-diacylglycerol: step 2/2. Its function is as follows. Catalyzes the formation of phosphatidylethanolamine (PtdEtn) from phosphatidylserine (PtdSer). The polypeptide is Phosphatidylserine decarboxylase proenzyme (Ralstonia pickettii (strain 12J)).